Here is a 733-residue protein sequence, read N- to C-terminus: Cell division cycle protein 48 homolog AF_1297 (733 aa).

Residues 223 to 230 (GPPGTGKT) and 496 to 503 (GPPGTGKT) contribute to the ATP site.

The protein belongs to the AAA ATPase family. CDC48 subfamily.

The chain is Cell division cycle protein 48 homolog AF_1297 from Archaeoglobus fulgidus (strain ATCC 49558 / DSM 4304 / JCM 9628 / NBRC 100126 / VC-16).